The chain runs to 485 residues: Serine/threonine-protein kinase dst4 (485 aa).

Positions 21 to 278 constitute a Protein kinase domain; that stretch reads FRVLEVIGQG…AVDLLNHPFI (258 aa). ATP contacts are provided by residues 27–35 and lysine 50; that span reads IGQGSFGVV. Aspartate 142 acts as the Proton acceptor in catalysis. Disordered stretches follow at residues 304 to 343, 360 to 424, and 436 to 485; these read RRKKAEEEEAEEAEEGDDYDDVNGGGDERQHGSSVSSAGL, VMRE…GSVV, and SMKL…NQDD. Residues 310-324 are compositionally biased toward acidic residues; the sequence is EEEAEEAEEGDDYDD. The span at 370–393 shows a compositional bias: low complexity; sequence SNNGGTFIYNNNNNNSSKTSSSGT. Composition is skewed to acidic residues over residues 406 to 417 and 450 to 468; these read DDDDDDDIEEGG and SSDEEDEEDEDDEDDEEGG. Residues 474–485 show a composition bias toward polar residues; it reads VVYTKSPVNQDD.

It belongs to the protein kinase superfamily. STE Ser/Thr protein kinase family. STE20 subfamily. Requires Mg(2+) as cofactor.

The catalysed reaction is L-seryl-[protein] + ATP = O-phospho-L-seryl-[protein] + ADP + H(+). The enzyme catalyses L-threonyl-[protein] + ATP = O-phospho-L-threonyl-[protein] + ADP + H(+). In Dictyostelium discoideum (Social amoeba), this protein is Serine/threonine-protein kinase dst4.